We begin with the raw amino-acid sequence, 301 residues long: ATP synthase gamma chain (301 aa).

The protein belongs to the ATPase gamma chain family. As to quaternary structure, F-type ATPases have 2 components, CF(1) - the catalytic core - and CF(0) - the membrane proton channel. CF(1) has five subunits: alpha(3), beta(3), gamma(1), delta(1), epsilon(1). CF(0) has three main subunits: a, b and c.

The protein localises to the cell inner membrane. Its function is as follows. Produces ATP from ADP in the presence of a proton gradient across the membrane. The gamma chain is believed to be important in regulating ATPase activity and the flow of protons through the CF(0) complex. The sequence is that of ATP synthase gamma chain from Bordetella bronchiseptica (strain ATCC BAA-588 / NCTC 13252 / RB50) (Alcaligenes bronchisepticus).